The chain runs to 358 residues: MAAAAAAGPEMVRGQVFDVGPRYTNLSYIGEGAYGMVCSAYDNLNKVRVAIKKISPFEHQTYCQRTLREIKILLRFRHENIIGINDIIRAPTIEQMKDVYIVQDLMETDLYKLLKTQHLSNDHICYFLYQILRGLKYIHSANVLHRDLKPSNLLLNTTCDLKICDFGLARVADPDHDHTGFLTEYVATRWYRAPEIMLNSKGYTKSIDIWSVGCILAEMLSNRPIFPGKHYLDQLNHILGILGSPSQEDLNCIINLKARNYLLSLPHKNKVPWNRLFPNADSKALDLLDKMLTFNPHKRIEVEQALAHPYLEQYYDPSDEPIAEAPFKFDMELDDLPKEKLKELIFEETARFQPGYRS.

A2 is subject to N-acetylalanine. The 289-residue stretch at 23 to 311 (YTNLSYIGEG…VEQALAHPYL (289 aa)) folds into the Protein kinase domain. At S27 the chain carries Phosphoserine; by SGK1. ATP-binding positions include 29–37 (IGEGAYGMV) and K52. Catalysis depends on D147, which acts as the Proton acceptor. T183 is subject to Phosphothreonine; by MAP2K1 and MAP2K2. The short motif at 183–185 (TEY) is the TXY element. Phosphotyrosine; by MAP2K1 and MAP2K2 is present on Y185. T188 is modified (phosphothreonine; by autocatalysis). A phosphoserine mark is found at S244, S246, and S282.

Belongs to the protein kinase superfamily. CMGC Ser/Thr protein kinase family. MAP kinase subfamily. Binds both upstream activators and downstream substrates in multimolecular complexes. This interaction inhibits its tyrosine-kinase activity. Interacts with ADAM15, ARHGEF2, ARRB2, DAPK1 (via death domain), HSF4, IER3, IPO7, NISCH, SGK1, and isoform 1 of NEK2. Interacts (via phosphorylated form) with TPR (via C-terminal region and phosphorylated form); the interaction requires dimerization of MAPK1/ERK2 and increases following EGF stimulation. Interacts with MAP2K1. Interacts with DUSP6. Interacts (phosphorylated form) with CAV2 ('Tyr-19'-phosphorylated form); the interaction, promoted by insulin, leads to nuclear location and MAPK1 activation. Interacts with DCC. Interacts with MORG1. Interacts with PEA15. Interacts with MKNK2. MKNK2 isoform 1 binding prevents from dephosphorylation and inactivation. The phosphorylated form interacts with PML. Interacts with STYX. Interacts with CDK2AP2. Interacts with CAVIN4. Interacts with DUSP7; the interaction enhances DUSP7 phosphatase activity. Interacts with GIT1; this interaction is necessary for MAPK1 localization to focal adhesions. Interacts with ZNF263. Interacts with phosphoglycerate kinase PGK1; the interaction is direct, occurs under hypoxic conditions, and promotes interaction between PGK1 and PIN1. Mg(2+) is required as a cofactor. Post-translationally, dually phosphorylated on Thr-183 and Tyr-185, which activates the enzyme. Ligand-activated ALK induces tyrosine phosphorylation. Dephosphorylated by PTPRJ at Tyr-185. Phosphorylated upon FLT3 and KIT signaling. Dephosphorylated by DUSP1 and DUSP2 at Thr-183 and Tyr-185. In terms of processing, ISGylated. Ubiquitinated by TRIM15 via 'Lys-63'-linked ubiquitination; leading to activation. Deubiquitinated by CYLD. As to expression, widely expressed.

It localises to the cytoplasm. It is found in the cytoskeleton. The protein localises to the spindle. The protein resides in the nucleus. Its subcellular location is the microtubule organizing center. It localises to the centrosome. It is found in the membrane. The protein localises to the caveola. The protein resides in the cell junction. Its subcellular location is the focal adhesion. It carries out the reaction L-seryl-[protein] + ATP = O-phospho-L-seryl-[protein] + ADP + H(+). The enzyme catalyses L-threonyl-[protein] + ATP = O-phospho-L-threonyl-[protein] + ADP + H(+). Phosphorylated by MAP2K1/MEK1 and MAP2K2/MEK2 on Thr-183 and Tyr-185 in response to external stimuli like insulin or NGF. Both phosphorylations are required for activity. This phosphorylation causes dramatic conformational changes, which enable full activation and interaction of MAPK1/ERK2 with its substrates. Phosphorylation on Ser-27 by SGK1 results in its activation by enhancing its interaction with MAP2K1/MEK1 and MAP2K2/MEK2. Dephosphorylated and inactivated by DUSP1, DUSP3, DUSP6 and DUSP9. Inactivated by pyrimidylpyrrole inhibitors. Its function is as follows. Serine/threonine kinase which acts as an essential component of the MAP kinase signal transduction pathway. MAPK1/ERK2 and MAPK3/ERK1 are the 2 MAPKs which play an important role in the MAPK/ERK cascade. They participate also in a signaling cascade initiated by activated KIT and KITLG/SCF. Depending on the cellular context, the MAPK/ERK cascade mediates diverse biological functions such as cell growth, adhesion, survival and differentiation through the regulation of transcription, translation, cytoskeletal rearrangements. The MAPK/ERK cascade also plays a role in initiation and regulation of meiosis, mitosis, and postmitotic functions in differentiated cells by phosphorylating a number of transcription factors. About 160 substrates have already been discovered for ERKs. Many of these substrates are localized in the nucleus, and seem to participate in the regulation of transcription upon stimulation. However, other substrates are found in the cytosol as well as in other cellular organelles, and those are responsible for processes such as translation, mitosis and apoptosis. Moreover, the MAPK/ERK cascade is also involved in the regulation of the endosomal dynamics, including lysosome processing and endosome cycling through the perinuclear recycling compartment (PNRC); as well as in the fragmentation of the Golgi apparatus during mitosis. The substrates include transcription factors (such as ATF2, BCL6, ELK1, ERF, FOS, HSF4 or SPZ1), cytoskeletal elements (such as CANX, CTTN, GJA1, MAP2, MAPT, PXN, SORBS3 or STMN1), regulators of apoptosis (such as BAD, BTG2, CASP9, DAPK1, IER3, MCL1 or PPARG), regulators of translation (such as EIF4EBP1 and FXR1) and a variety of other signaling-related molecules (like ARHGEF2, DCC, FRS2 or GRB10). Protein kinases (such as RAF1, RPS6KA1/RSK1, RPS6KA3/RSK2, RPS6KA2/RSK3, RPS6KA6/RSK4, SYK, MKNK1/MNK1, MKNK2/MNK2, RPS6KA5/MSK1, RPS6KA4/MSK2, MAPKAPK3 or MAPKAPK5) and phosphatases (such as DUSP1, DUSP4, DUSP6 or DUSP16) are other substrates which enable the propagation the MAPK/ERK signal to additional cytosolic and nuclear targets, thereby extending the specificity of the cascade. Mediates phosphorylation of TPR in response to EGF stimulation. May play a role in the spindle assembly checkpoint. Phosphorylates PML and promotes its interaction with PIN1, leading to PML degradation. Phosphorylates CDK2AP2. Phosphorylates phosphoglycerate kinase PGK1 under hypoxic conditions to promote its targeting to the mitochondrion and suppress the formation of acetyl-coenzyme A from pyruvate. Acts as a transcriptional repressor. Binds to a [GC]AAA[GC] consensus sequence. Repress the expression of interferon gamma-induced genes. Seems to bind to the promoter of CCL5, DMP1, IFIH1, IFITM1, IRF7, IRF9, LAMP3, OAS1, OAS2, OAS3 and STAT1. Transcriptional activity is independent of kinase activity. This is Mitogen-activated protein kinase 1 from Mus musculus (Mouse).